Consider the following 1027-residue polypeptide: MDDESDDKDDTKSFLCRKSRNLSEKKRRDQFNSLVNDLSALISTSSRKMDKSTVLKSTIAFLKNHNEATDRSKVFEIQQDWKPAFLSNDEYTHLMLESLDGFMMVFSSMGSIFYASESITSQLGYLPQDLYNMTIYDLAYEMDHEALLNIFMNPTPVIEPRQTDISSSNQITFYTHLRRGGMEKVDANAYELVKFVGYFRNDTNTSTGSSSEVSNGSNGQPAVLPRIFQQNPNAEVDKKLVFVGTGRVQNPQLIREMSIIDPTSNEFTSKHSMEWKFLFLDHRAPPIIGYMPFEVLGTSGYDYYHFDDLDSIVACHEELRQTGEGKSCYYRFLTKGQQWIWLQTDYYVSYHQFNSKPDYVVCTHKVVSYAEVLKDSRKEGQKSGNSNSITNNGSSKVIASTGTSSKSASATTTLRDFELSSQNLDSTLLGNSLASLGTETAATSPAVDSSPMWSASAVQPSGSCQINPLKTSRPASSYGNISSTGISPKAKRKCYFYNNRGNDSDSTSMSTDSVTSRQSMMTHVSSQSQRQRSHHREHHRENHHNQSHHHMQQQQQHQNQQQQHQQHQQLQQQLQHTVGTPKMVPLLPIASTQIMAGNACQFPQPAYPLASPQLVAPTFLEPPQYLTAIPMQPVIAPFPVAPVLSPLPVQSQTDMLPDTVVMTPTQSQLQDQLQRKHDELQKLILQQQNELRIVSEQLLLSRYTYLQPMMSMGFAPGNMTAAAVGNLGASGQRGLNFTGSNAVQPQFNQYGFALNSEQMLNQQDQQMMMQQQQNLHTQHQHNLQQQHQSHSQLQQHTQQQHQQQQQQQQQQQQQQQQQQQQQQQQQQQQQQQQQLQLQQQNDILLREDIDDIDAFLNLSPLHSLGSQSTINPFNSSSNNNNQSYNGGSNLNNGNQNNNNRSSNPPQNNNEDSLLSCMQMATESSPSINFHMGISDDGSETQSEDNKMMHTSGSNLVQQQQQQQQQQQILQQHQQQSNSFFSSNPFLNSQNQNQNQLPNDLEILPYQMSQEQSQNLFNSPHTAPGSSQ.

Positions L15 to H65 constitute a bHLH domain. 2 consecutive PAS domains span residues N88–P160 and R255–Q321. Disordered stretches follow at residues R377–G402, T443–Q575, Q765–Q800, T869–D911, and S926–Q1027. Over residues S383–G402 the composition is skewed to low complexity. The span at T443–I486 shows a compositional bias: polar residues. Composition is skewed to low complexity over residues S504 to S516 and Q552 to Q575. The implicated in the circadian rhythmicity stretch occupies residues Q780–Q1027. 2 stretches are compositionally biased toward low complexity: residues N871–N909 and S951–Q995. The segment covering Q1006 to Q1027 has biased composition (polar residues).

In terms of assembly, efficient DNA binding requires dimerization with another bHLH protein. Forms a heterodimer with Cycle. As to expression, widely expressed. Found in head, body, and appendage fractions.

The protein resides in the nucleus. In terms of biological role, circadian regulator that acts as a transcription factor and generates a rhythmic output with a period of about 24 hours. Oscillates in antiphase to the cycling observed for period (PER) and timeless (TIM). According to PubMed:9742131, reaches peak abundance within several hours of the dark-light transition at ZT0 (zeitgeber 0), whereas PubMed:9616122 describes bimodal oscillating expression with maximum at ZT5 and ZT23. Clock-cycle heterodimers activate cycling transcription of PER and TIM by binding to the E-box (5'-CACGTG-3') present in their promoters. Once induced, Period and Timeless block Clock's ability to transactivate their promoters. This chain is Circadian locomoter output cycles protein kaput (Clk), found in Drosophila melanogaster (Fruit fly).